We begin with the raw amino-acid sequence, 133 residues long: Bacteriohemerythrin (133 aa).

The Fe cation site is built by H19, H56, E60, H75, H79, H115, and D120.

This sequence belongs to the hemerythrin family. In terms of assembly, monomer.

Functionally, oxygen-binding protein. May be involved in a storage mechanism or for delivery to oxygen-requiring enzymes. The oxygen-binding site contains two iron atoms. In Campylobacter jejuni subsp. jejuni serotype O:23/36 (strain 81-176), this protein is Bacteriohemerythrin.